Here is a 257-residue protein sequence, read N- to C-terminus: Imidazole glycerol phosphate synthase subunit HisF (257 aa).

Active-site residues include Asp-12 and Asp-131.

The protein belongs to the HisA/HisF family. As to quaternary structure, heterodimer of HisH and HisF.

It localises to the cytoplasm. The catalysed reaction is 5-[(5-phospho-1-deoxy-D-ribulos-1-ylimino)methylamino]-1-(5-phospho-beta-D-ribosyl)imidazole-4-carboxamide + L-glutamine = D-erythro-1-(imidazol-4-yl)glycerol 3-phosphate + 5-amino-1-(5-phospho-beta-D-ribosyl)imidazole-4-carboxamide + L-glutamate + H(+). It functions in the pathway amino-acid biosynthesis; L-histidine biosynthesis; L-histidine from 5-phospho-alpha-D-ribose 1-diphosphate: step 5/9. Its function is as follows. IGPS catalyzes the conversion of PRFAR and glutamine to IGP, AICAR and glutamate. The HisF subunit catalyzes the cyclization activity that produces IGP and AICAR from PRFAR using the ammonia provided by the HisH subunit. The sequence is that of Imidazole glycerol phosphate synthase subunit HisF from Burkholderia pseudomallei (strain 1106a).